The primary structure comprises 282 residues: Acetylglutamate kinase (282 aa).

Residues 62-63, arginine 84, and asparagine 178 contribute to the substrate site; that span reads GG.

The protein belongs to the acetylglutamate kinase family. ArgB subfamily.

It localises to the cytoplasm. It carries out the reaction N-acetyl-L-glutamate + ATP = N-acetyl-L-glutamyl 5-phosphate + ADP. The protein operates within amino-acid biosynthesis; L-arginine biosynthesis; N(2)-acetyl-L-ornithine from L-glutamate: step 2/4. Catalyzes the ATP-dependent phosphorylation of N-acetyl-L-glutamate. The chain is Acetylglutamate kinase from Thermotoga neapolitana (strain ATCC 49049 / DSM 4359 / NBRC 107923 / NS-E).